The following is a 129-amino-acid chain: Fluoride-specific ion channel FluC 1 (129 aa).

4 helical membrane-spanning segments follow: residues 9 to 29 (LSVGIFAFFGGGLRAYLNLIW), 33 to 53 (GTLTANIIGCFLLAFFTYFFV), 62 to 82 (LVTGLSTGFVGSFTTFSSFNL), and 98 to 118 (IYFFSSIFIGFLFAYLGMLVG). Gly72 and Thr75 together coordinate Na(+).

This sequence belongs to the fluoride channel Fluc/FEX (TC 1.A.43) family.

It is found in the cell membrane. It carries out the reaction fluoride(in) = fluoride(out). Na(+) is not transported, but it plays an essential structural role and its presence is essential for fluoride channel function. Its function is as follows. Fluoride-specific ion channel. Important for reducing fluoride concentration in the cell, thus reducing its toxicity. This is Fluoride-specific ion channel FluC 1 from Lactobacillus johnsonii (strain CNCM I-12250 / La1 / NCC 533).